The sequence spans 715 residues: Fatty acid oxidation complex subunit alpha (715 aa).

An enoyl-CoA hydratase region spans residues 8–197; that stretch reads NSQPSAFSLT…NLGLVEEAVP (190 aa). Positions 313–715 are 3-hydroxyacyl-CoA dehydrogenase; it reads ATIKKVGVLG…MANEEQSFYS (403 aa).

In the N-terminal section; belongs to the enoyl-CoA hydratase/isomerase family. This sequence in the central section; belongs to the 3-hydroxyacyl-CoA dehydrogenase family. As to quaternary structure, heterotetramer of two alpha chains (FadJ) and two beta chains (FadI).

The protein localises to the cytoplasm. It catalyses the reaction a (3S)-3-hydroxyacyl-CoA = a (2E)-enoyl-CoA + H2O. The enzyme catalyses a 4-saturated-(3S)-3-hydroxyacyl-CoA = a (3E)-enoyl-CoA + H2O. The catalysed reaction is a (3S)-3-hydroxyacyl-CoA + NAD(+) = a 3-oxoacyl-CoA + NADH + H(+). It carries out the reaction (3S)-3-hydroxybutanoyl-CoA = (3R)-3-hydroxybutanoyl-CoA. Its pathway is lipid metabolism; fatty acid beta-oxidation. Functionally, catalyzes the formation of a hydroxyacyl-CoA by addition of water on enoyl-CoA. Also exhibits 3-hydroxyacyl-CoA epimerase and 3-hydroxyacyl-CoA dehydrogenase activities. The protein is Fatty acid oxidation complex subunit alpha of Photobacterium profundum (strain SS9).